The following is an 822-amino-acid chain: uncharacterized protein (822 aa).

The Cytoplasmic segment spans residues 1-13 (MCHNSVRSGNKAG). A helical membrane pass occupies residues 14–34 (FLGIKFGSALLSIATGAIAIA). The Extracellular portion of the chain corresponds to 35–44 (LLCKFHDHEA). The chain crosses the membrane as a helical span at residues 45 to 65 (VLIVIVCSTLLYGIPSLISFI). The Cytoplasmic portion of the chain corresponds to 66 to 76 (TETVFAPSKFH). The chain crosses the membrane as a helical span at residues 77–97 (IGYFYNVLNFALPLITMGCTV). The Extracellular portion of the chain corresponds to 98 to 120 (DYFHNTLRSPISVQSESHRVYIT). A helical membrane pass occupies residues 121–141 (TLDSLLIFTLFINGIQLGFFL). Residues 142-822 (KDGNANNFGS…PVEELVSPSK (681 aa)) are Cytoplasmic-facing. The disordered stretch occupies residues 271–290 (RNTQQATKVPTEKKSNHRSS). Ser-690 is subject to Phosphoserine. Residues 698–712 (TLQSSHSPTKSTSGN) show a composition bias toward polar residues. 2 disordered regions span residues 698–728 (TLQSSHSPTKSTSGNSRRDSLNNDRTQSTVN) and 751–783 (NGEEPVLDTPQSIQSSSSGSEQESAGSGSGYPE). A compositionally biased stretch (low complexity) spans 761–776 (QSIQSSSSGSEQESAG).

The protein localises to the membrane. This is an uncharacterized protein from Saccharomyces cerevisiae (strain ATCC 204508 / S288c) (Baker's yeast).